Here is an 834-residue protein sequence, read N- to C-terminus: Periplasmic nitrate reductase (834 aa).

The segment at residues 1 to 29 is a signal peptide (tat-type signal); it reads MNLTRREFAKANAAAIAAAAAGLPILVRA. Residues 41 to 97 enclose the 4Fe-4S Mo/W bis-MGD-type domain; it reads LVWNKAPCRFCGTGCSVMVATRDGQVVATHGDIKAEVNRGINCVKGYFLSKIMYGSD. Cys-48, Cys-51, Cys-55, and Cys-83 together coordinate [4Fe-4S] cluster. Residues Lys-85, Gln-152, Asn-177, Cys-181, 214 to 221, 245 to 249, 264 to 266, Met-375, Gln-379, Asn-485, 511 to 512, Lys-534, Asp-561, and 721 to 730 contribute to the Mo-bis(molybdopterin guanine dinucleotide) site; these read WGSNMAEM, STFEH, QTD, SD, and TGRVLEHWHT. Phe-797 is a binding site for substrate. Mo-bis(molybdopterin guanine dinucleotide) is bound by residues Asn-805 and Lys-822.

This sequence belongs to the prokaryotic molybdopterin-containing oxidoreductase family. NasA/NapA/NarB subfamily. As to quaternary structure, component of the periplasmic nitrate reductase NapAB complex composed of NapA and NapB. It depends on [4Fe-4S] cluster as a cofactor. Mo-bis(molybdopterin guanine dinucleotide) serves as cofactor. Predicted to be exported by the Tat system. The position of the signal peptide cleavage has not been experimentally proven.

It localises to the periplasm. It catalyses the reaction 2 Fe(II)-[cytochrome] + nitrate + 2 H(+) = 2 Fe(III)-[cytochrome] + nitrite + H2O. Its function is as follows. Catalytic subunit of the periplasmic nitrate reductase complex NapAB. Receives electrons from NapB and catalyzes the reduction of nitrate to nitrite. In Pseudomonas aeruginosa (strain UCBPP-PA14), this protein is Periplasmic nitrate reductase.